A 449-amino-acid polypeptide reads, in one-letter code: Keratin, type I cytoskeletal 27 (449 aa).

The segment at 1 to 73 is head; that stretch reads MSVRFSSASR…VNEHGLLSGN (73 aa). The coil 1A stretch occupies residues 74–109; sequence EKVTMQNLNDRLASYLENVQALEEANADLEQKIKDW. The IF rod domain occupies 74-389; it reads EKVTMQNLND…LLIGGDEGSC (316 aa). The segment at 110–131 is linker 1; it reads YEKFGPGSCRGLDHDYSRYFPI. The coil 1B stretch occupies residues 132–223; it reads IDDLRTQIIS…KNHEEEMQAL (92 aa). The interval 224 to 246 is linker 12; the sequence is QCAAGGNVNVEMNAAPGVDLTVL. The tract at residues 247 to 385 is coil 2; that stretch reads LNNMRAEYEA…ETYCLLIGGD (139 aa). The tail stretch occupies residues 386-449; that stretch reads EGSCVKSKGQ…NNKNEQRIPS (64 aa). The tract at residues 425-449 is disordered; the sequence is LSSRVHTLEEKSTKVNNKNEQRIPS. Residues 430-449 are compositionally biased toward basic and acidic residues; sequence HTLEEKSTKVNNKNEQRIPS.

The protein belongs to the intermediate filament family. As to quaternary structure, heterotetramer of two type I and two type II keratins. Interacts with KRT6A to form filaments.

The protein localises to the cytoplasm. Essential for the proper assembly of type I and type II keratin protein complexes and formation of keratin intermediate filaments in the inner root sheath (irs). This Rattus norvegicus (Rat) protein is Keratin, type I cytoskeletal 27.